We begin with the raw amino-acid sequence, 107 residues long: Nucleoid-associated protein Mmar10_0436 (107 aa).

Belongs to the YbaB/EbfC family. As to quaternary structure, homodimer.

The protein resides in the cytoplasm. It localises to the nucleoid. Binds to DNA and alters its conformation. May be involved in regulation of gene expression, nucleoid organization and DNA protection. The polypeptide is Nucleoid-associated protein Mmar10_0436 (Maricaulis maris (strain MCS10) (Caulobacter maris)).